Here is a 269-residue protein sequence, read N- to C-terminus: Tryptophan synthase alpha chain (269 aa).

Catalysis depends on proton acceptor residues Glu-49 and Asp-60.

Belongs to the TrpA family. In terms of assembly, tetramer of two alpha and two beta chains.

It catalyses the reaction (1S,2R)-1-C-(indol-3-yl)glycerol 3-phosphate + L-serine = D-glyceraldehyde 3-phosphate + L-tryptophan + H2O. Its pathway is amino-acid biosynthesis; L-tryptophan biosynthesis; L-tryptophan from chorismate: step 5/5. The alpha subunit is responsible for the aldol cleavage of indoleglycerol phosphate to indole and glyceraldehyde 3-phosphate. In Pseudomonas putida (strain ATCC 700007 / DSM 6899 / JCM 31910 / BCRC 17059 / LMG 24140 / F1), this protein is Tryptophan synthase alpha chain.